The primary structure comprises 328 residues: ATP-dependent 6-phosphofructokinase (328 aa).

Gly11 is an ATP binding site. Residue 21–25 participates in ADP binding; that stretch reads RAAVR. ATP is bound by residues 72–73 and 102–105; these read RS and GNGT. Asn103 serves as a coordination point for Mg(2+). 126–128 contacts substrate; the sequence is TID. The Proton acceptor role is filled by Asp128. An ADP-binding site is contributed by Arg155. Residues Arg163 and 170–172 each bind substrate; that span reads MGR. ADP is bound by residues 186–188 and 214–216; these read GAE and KAS. Residues Glu223, Arg247, and 253-256 contribute to the substrate site; that span reads HVQR.

This sequence belongs to the phosphofructokinase type A (PFKA) family. ATP-dependent PFK group I subfamily. Prokaryotic clade 'B1' sub-subfamily. As to quaternary structure, homotetramer. Requires Mg(2+) as cofactor.

It is found in the cytoplasm. The enzyme catalyses beta-D-fructose 6-phosphate + ATP = beta-D-fructose 1,6-bisphosphate + ADP + H(+). It participates in carbohydrate degradation; glycolysis; D-glyceraldehyde 3-phosphate and glycerone phosphate from D-glucose: step 3/4. Allosterically activated by ADP and other diphosphonucleosides, and allosterically inhibited by phosphoenolpyruvate. Its function is as follows. Catalyzes the phosphorylation of D-fructose 6-phosphate to fructose 1,6-bisphosphate by ATP, the first committing step of glycolysis. The sequence is that of ATP-dependent 6-phosphofructokinase from Cytophaga hutchinsonii (strain ATCC 33406 / DSM 1761 / CIP 103989 / NBRC 15051 / NCIMB 9469 / D465).